A 427-amino-acid polypeptide reads, in one-letter code: MPVSLLRALLVFSLLCLGLSATRAAHAAMEIEVVGGAANKIAIAMVPFQTAAGQPSPPLTQIVADDLARSGQFSMTDVTGAAQPVEPSQVDYAAWRTKGAEAMVIGQVVALGGGRFEVRFRLLDVVKGTQLAGYSYKITAAQWRATGHRIADVVYEKLTGIPGAFSSRIAYVQKQGKRYELRVADADGQNPRTIVRSLEPLISPMFSPDGTRLAYVSFEDKKPVVYVQSLQQGGRRKVAAFKGSNSAPAWSPDGRQLAVVLTRDGASQIYLINVDGSGLTRLMRSGDIDTEPVFSPDGQTLYFTSDRGGSPQIYRVAKSGGDAKRVSFEGSYNVSPTISPDGRYLAYISRDGGRFRVVLQELASGQTRVLTETTRDEAPSFAPNGQAVLYATVQGGRGVLGTVTLDGKTRARLSESGVDAREPAWGP.

The N-terminal stretch at 1 to 27 (MPVSLLRALLVFSLLCLGLSATRAAHA) is a signal peptide.

This sequence belongs to the TolB family. In terms of assembly, the Tol-Pal system is composed of five core proteins: the inner membrane proteins TolA, TolQ and TolR, the periplasmic protein TolB and the outer membrane protein Pal. They form a network linking the inner and outer membranes and the peptidoglycan layer.

It localises to the periplasm. In terms of biological role, part of the Tol-Pal system, which plays a role in outer membrane invagination during cell division and is important for maintaining outer membrane integrity. The polypeptide is Tol-Pal system protein TolB (Thiobacillus denitrificans (strain ATCC 25259 / T1)).